A 65-amino-acid polypeptide reads, in one-letter code: MEGSKRKHDSRRLQQEQEQLRPRTPPSYEEIAKYGHSFNVKRFTNEEMCLKNDYPRIISYNPPPK.

Positions 1–10 (MEGSKRKHDS) are enriched in basic residues. The interval 1–27 (MEGSKRKHDSRRLQQEQEQLRPRTPPS) is disordered. The span at 11 to 21 (RRLQQEQEQLR) shows a compositional bias: basic and acidic residues.

The protein belongs to the orthopoxvirus OPG052 family.

This is Protein OPG052 (OPG052) from Bos taurus (Bovine).